A 290-amino-acid polypeptide reads, in one-letter code: Probable endonuclease 4 (290 aa).

Zn(2+)-binding residues include His69, His109, Glu145, Asp179, His182, His216, Asp229, His231, and Glu261.

This sequence belongs to the AP endonuclease 2 family. The cofactor is Zn(2+).

It carries out the reaction Endonucleolytic cleavage to 5'-phosphooligonucleotide end-products.. Functionally, endonuclease IV plays a role in DNA repair. It cleaves phosphodiester bonds at apurinic or apyrimidinic (AP) sites, generating a 3'-hydroxyl group and a 5'-terminal sugar phosphate. The polypeptide is Probable endonuclease 4 (Chlorobium limicola (strain DSM 245 / NBRC 103803 / 6330)).